The primary structure comprises 196 residues: ATP-dependent Clp protease proteolytic subunit (196 aa).

Catalysis depends on Ser96, which acts as the Nucleophile. Residue His121 is part of the active site.

The protein belongs to the peptidase S14 family. Fourteen ClpP subunits assemble into 2 heptameric rings which stack back to back to give a disk-like structure with a central cavity, resembling the structure of eukaryotic proteasomes.

Its subcellular location is the cytoplasm. It catalyses the reaction Hydrolysis of proteins to small peptides in the presence of ATP and magnesium. alpha-casein is the usual test substrate. In the absence of ATP, only oligopeptides shorter than five residues are hydrolyzed (such as succinyl-Leu-Tyr-|-NHMec, and Leu-Tyr-Leu-|-Tyr-Trp, in which cleavage of the -Tyr-|-Leu- and -Tyr-|-Trp bonds also occurs).. Its function is as follows. Cleaves peptides in various proteins in a process that requires ATP hydrolysis. Has a chymotrypsin-like activity. Plays a major role in the degradation of misfolded proteins. In Streptococcus suis (strain 98HAH33), this protein is ATP-dependent Clp protease proteolytic subunit.